A 283-amino-acid chain; its full sequence is Lysozyme-like protein 7 (283 aa).

The N-terminal stretch at 1–18 is a signal peptide; that stretch reads MAHKSIVIFSVLAVLCHS. The Ch-type lysozyme domain occupies 53–273; the sequence is YAYALDIYVQ…AVEEDGKIYA (221 aa).

This sequence belongs to the glycosyl hydrolase 25 family. Expressed in intestine. Expressed in rectal gland cells and head neurons.

Plays a role in resistance to Gram-positive bacteria B.thuringiensis and M.nematophilum and Gram-negative bacteria S.boydii or S.flexneri infection and to fungus C.neoformans infection. Plays a role in susceptibility to Gram-negative bacterium S.typhimurium infection. The protein is Lysozyme-like protein 7 of Caenorhabditis elegans.